Reading from the N-terminus, the 1404-residue chain is DNA-directed RNA polymerase subunit beta' (1404 aa).

Positions 70, 72, 85, and 88 each coordinate Zn(2+). Positions 458, 460, and 462 each coordinate Mg(2+). Residues Cys-813, Cys-887, Cys-894, and Cys-897 each coordinate Zn(2+). The tract at residues 1377 to 1404 is disordered; the sequence is ERRAIAESEAAELEASQAETSDENAAAE.

This sequence belongs to the RNA polymerase beta' chain family. In terms of assembly, the RNAP catalytic core consists of 2 alpha, 1 beta, 1 beta' and 1 omega subunit. When a sigma factor is associated with the core the holoenzyme is formed, which can initiate transcription. It depends on Mg(2+) as a cofactor. Zn(2+) is required as a cofactor.

The catalysed reaction is RNA(n) + a ribonucleoside 5'-triphosphate = RNA(n+1) + diphosphate. In terms of biological role, DNA-dependent RNA polymerase catalyzes the transcription of DNA into RNA using the four ribonucleoside triphosphates as substrates. In Polaromonas naphthalenivorans (strain CJ2), this protein is DNA-directed RNA polymerase subunit beta'.